The following is a 303-amino-acid chain: Pantothenate synthetase (303 aa).

The segment at 1 to 21 is disordered; it reads MIATGHGGAERRTTAGDGTAR. Position 48 to 55 (48 to 55) interacts with ATP; that stretch reads MGALHDGH. Residue H55 is the Proton donor of the active site. Q79 contributes to the (R)-pantoate binding site. Q79 is a beta-alanine binding site. 165-168 is a binding site for ATP; sequence GRKD. Residue Q171 coordinates (R)-pantoate. ATP is bound at residue 202-205; that stretch reads ASSR.

Belongs to the pantothenate synthetase family. Homodimer.

Its subcellular location is the cytoplasm. It carries out the reaction (R)-pantoate + beta-alanine + ATP = (R)-pantothenate + AMP + diphosphate + H(+). Its pathway is cofactor biosynthesis; (R)-pantothenate biosynthesis; (R)-pantothenate from (R)-pantoate and beta-alanine: step 1/1. Catalyzes the condensation of pantoate with beta-alanine in an ATP-dependent reaction via a pantoyl-adenylate intermediate. In Acidothermus cellulolyticus (strain ATCC 43068 / DSM 8971 / 11B), this protein is Pantothenate synthetase.